A 161-amino-acid chain; its full sequence is MAAKAFFDIKAGDERLGRIIFELFNDVPDTTRNFRELCTHKNNFGYKGSVFHRIIPGFMCQGGDFTNGDGTGGKSIYGNKFKDENFNHKHEAFSLSMANAGPNTNGSQFFITTVPCSWLDGKHVVFGKVVSGIDVVKKMESLGSTSGKPSKKIIIEDCGEC.

The PPIase cyclophilin-type domain maps to 6–160; it reads FFDIKAGDER…KKIIIEDCGE (155 aa).

This sequence belongs to the cyclophilin-type PPIase family. PPIase A subfamily. As to expression, found mainly in the tegument, gut epithelium, and muscle layers. Also found in the interior of the parasite.

The enzyme catalyses [protein]-peptidylproline (omega=180) = [protein]-peptidylproline (omega=0). Its activity is regulated as follows. Binds cyclosporin A (CsA). CsA mediates some of its effects via an inhibitory action on PPIase. Its function is as follows. PPIases accelerate the folding of proteins. It catalyzes the cis-trans isomerization of proline imidic peptide bonds in oligopeptides. This is Peptidyl-prolyl cis-trans isomerase from Schistosoma mansoni (Blood fluke).